A 38-amino-acid polypeptide reads, in one-letter code: Iota-conotoxin-like L11.5 (38 aa).

Disulfide bonds link cysteine 5–cysteine 19, cysteine 12–cysteine 24, cysteine 18–cysteine 29, and cysteine 23–cysteine 36.

The protein belongs to the conotoxin I1 superfamily. As to expression, expressed by the venom duct.

It is found in the secreted. Functionally, iota-conotoxins bind to voltage-gated sodium channels (Nav) and act as agonists by shifting the voltage-dependence of activation to more hyperpolarized levels. Produces general excitatory symptoms. The polypeptide is Iota-conotoxin-like L11.5 (Conus lynceus (Lynceus cone)).